Consider the following 277-residue polypeptide: Bis(5'-nucleosyl)-tetraphosphatase, symmetrical (277 aa).

It belongs to the Ap4A hydrolase family.

The catalysed reaction is P(1),P(4)-bis(5'-adenosyl) tetraphosphate + H2O = 2 ADP + 2 H(+). In terms of biological role, hydrolyzes diadenosine 5',5'''-P1,P4-tetraphosphate to yield ADP. The polypeptide is Bis(5'-nucleosyl)-tetraphosphatase, symmetrical (Bordetella pertussis (strain Tohama I / ATCC BAA-589 / NCTC 13251)).